Here is a 351-residue protein sequence, read N- to C-terminus: Heat-inducible transcription repressor HrcA (351 aa).

This sequence belongs to the HrcA family.

Functionally, negative regulator of class I heat shock genes (grpE-dnaK-dnaJ and groELS operons). Prevents heat-shock induction of these operons. The sequence is that of Heat-inducible transcription repressor HrcA from Beutenbergia cavernae (strain ATCC BAA-8 / DSM 12333 / CCUG 43141 / JCM 11478 / NBRC 16432 / NCIMB 13614 / HKI 0122).